We begin with the raw amino-acid sequence, 200 residues long: GTP cyclohydrolase-2 (200 aa).

50–54 (RIHSE) serves as a coordination point for GTP. Zn(2+) contacts are provided by C55, C66, and C68. GTP-binding positions include Q71, 93–95 (EGR), and T115. Catalysis depends on D127, which acts as the Proton acceptor. Residue R129 is the Nucleophile of the active site. Residues T150 and K155 each contribute to the GTP site.

It belongs to the GTP cyclohydrolase II family. Zn(2+) is required as a cofactor.

The catalysed reaction is GTP + 4 H2O = 2,5-diamino-6-hydroxy-4-(5-phosphoribosylamino)-pyrimidine + formate + 2 phosphate + 3 H(+). It functions in the pathway cofactor biosynthesis; riboflavin biosynthesis; 5-amino-6-(D-ribitylamino)uracil from GTP: step 1/4. Catalyzes the conversion of GTP to 2,5-diamino-6-ribosylamino-4(3H)-pyrimidinone 5'-phosphate (DARP), formate and pyrophosphate. The sequence is that of GTP cyclohydrolase-2 from Acinetobacter baylyi (strain ATCC 33305 / BD413 / ADP1).